Here is a 185-residue protein sequence, read N- to C-terminus: Ribosome-recycling factor (185 aa).

This sequence belongs to the RRF family.

The protein resides in the cytoplasm. In terms of biological role, responsible for the release of ribosomes from messenger RNA at the termination of protein biosynthesis. May increase the efficiency of translation by recycling ribosomes from one round of translation to another. The polypeptide is Ribosome-recycling factor (Kocuria rhizophila (strain ATCC 9341 / DSM 348 / NBRC 103217 / DC2201)).